Reading from the N-terminus, the 117-residue chain is Large ribosomal subunit protein bL20 (117 aa).

It belongs to the bacterial ribosomal protein bL20 family.

In terms of biological role, binds directly to 23S ribosomal RNA and is necessary for the in vitro assembly process of the 50S ribosomal subunit. It is not involved in the protein synthesizing functions of that subunit. This chain is Large ribosomal subunit protein bL20, found in Photobacterium profundum (strain SS9).